A 424-amino-acid polypeptide reads, in one-letter code: Enolase (424 aa).

Q165 serves as a coordination point for (2R)-2-phosphoglycerate. The active-site Proton donor is the E207. D244, E283, and D310 together coordinate Mg(2+). Positions 335, 364, 365, and 386 each coordinate (2R)-2-phosphoglycerate. The active-site Proton acceptor is the K335.

The protein belongs to the enolase family. Requires Mg(2+) as cofactor.

The protein resides in the cytoplasm. Its subcellular location is the secreted. It localises to the cell surface. It catalyses the reaction (2R)-2-phosphoglycerate = phosphoenolpyruvate + H2O. It participates in carbohydrate degradation; glycolysis; pyruvate from D-glyceraldehyde 3-phosphate: step 4/5. Functionally, catalyzes the reversible conversion of 2-phosphoglycerate (2-PG) into phosphoenolpyruvate (PEP). It is essential for the degradation of carbohydrates via glycolysis. The protein is Enolase of Chlamydia caviae (strain ATCC VR-813 / DSM 19441 / 03DC25 / GPIC) (Chlamydophila caviae).